We begin with the raw amino-acid sequence, 161 residues long: MGCCYSSENEDSDQDREERKLLLDPSSTPTKALNGAEPNYHSLPSARTDEQALLSSILAKTASNIIDVSAADSQGMEQHEYMDRARQYSTRLAVLSSSLTHWKKLPPLPSLTSQPHQVLASEPIPFSDLQQVSRIAAYAYSALSQIRVDAKEELVVQFGIP.

Residues 1 to 43 are disordered; the sequence is MGCCYSSENEDSDQDREERKLLLDPSSTPTKALNGAEPNYHSL. A lipid anchor (N-myristoyl glycine) is attached at glycine 2. S-palmitoyl cysteine attachment occurs at residues cysteine 3 and cysteine 4. A Glycyl lysine isopeptide (Lys-Gly) (interchain with G-Cter in ubiquitin) cross-link involves residue lysine 20. Phosphoserine is present on serine 27. Position 28 is a phosphothreonine (threonine 28). Lysine 31 participates in a covalent cross-link: Glycyl lysine isopeptide (Lys-Gly) (interchain with G-Cter in ubiquitin). Phosphoserine is present on residues serine 42 and serine 56. A Glycyl lysine isopeptide (Lys-Gly) (interchain with G-Cter in ubiquitin) cross-link involves residue lysine 60. Serine 98 is subject to Phosphoserine. Glycyl lysine isopeptide (Lys-Gly) (interchain with G-Cter in ubiquitin) cross-links involve residues lysine 103 and lysine 104. The tract at residues 121–161 is interaction with LAMTOR2 and LAMTOR3; it reads SEPIPFSDLQQVSRIAAYAYSALSQIRVDAKEELVVQFGIP. Phosphoserine is present on serine 141.

It belongs to the LAMTOR1 family. In terms of assembly, part of the Ragulator complex composed of LAMTOR1, LAMTOR2, LAMTOR3, LAMTOR4 and LAMTOR5. LAMTOR4 and LAMTOR5 form a heterodimer that interacts, through LAMTOR1, with a LAMTOR2, LAMTOR3 heterodimer. Interacts with LAMTOR2 and LAMTOR3; the interaction is direct. The Ragulator complex interacts with both the mTORC1 complex and heterodimers constituted of the Rag GTPases RagA/RRAGA, RagB/RRAGB, RagC/RRAGC and RagD/RRAGD; regulated by amino acid availability. The Ragulator complex interacts with SLC38A9; the probable amino acid sensor. Component of the lysosomal folliculin complex (LFC), composed of FLCN, FNIP1 (or FNIP2), RagA/RRAGA or RagB/RRAGB GDP-bound, RagC/RRAGC or RagD/RRAGD GTP-bound, and Ragulator. Associates with the lysosomal V-ATPase complex; interaction promotes the guanine nucleotide exchange factor (GEF) of the Ragulator complex. Interacts with MMP14. Interacts with CDKN1B; prevents the interaction of CDKN1B with RHOA leaving RHOA in a form accessible to activation by ARHGEF2. Interacts with PIP4P1. N-terminal myristoylation and palmitoylation mediates its recruitment to lysosome membranes, thereby promoting localization of the Ragulator complex to lysosomes. N-myristoylation by NMT1 is required for palmitoylation at Cys-3 and Cys-4. In terms of processing, ubiquitinated at Lys-60, Lys-103 and Lys-104 by UBE3A in neurons, promoting its degradation by the proteasome, thereby limiting mTORC1 signaling and activity-dependent synaptic remodeling. Ubiquitination at Lys-20 impairs the association with the lysosomal V-ATPase complex. Deubiquitination at Lys-20 by USP32 promotes the association with the lysosomal V-ATPase complex and subsequent activation of the mTORC1 complex.

The protein resides in the lysosome membrane. It localises to the late endosome membrane. Its function is as follows. Key component of the Ragulator complex, a multiprotein complex involved in amino acid sensing and activation of mTORC1, a signaling complex promoting cell growth in response to growth factors, energy levels, and amino acids. Activated by amino acids through a mechanism involving the lysosomal V-ATPase, the Ragulator plays a dual role for the small GTPases Rag (RagA/RRAGA, RagB/RRAGB, RagC/RRAGC and/or RagD/RRAGD): it (1) acts as a guanine nucleotide exchange factor (GEF), activating the small GTPases Rag and (2) mediates recruitment of Rag GTPases to the lysosome membrane. Activated Ragulator and Rag GTPases function as a scaffold recruiting mTORC1 to lysosomes where it is in turn activated. LAMTOR1 is directly responsible for anchoring the Ragulator complex to the lysosomal membrane. LAMTOR1 wraps around the other subunits of the Ragulator complex to hold them in place and interacts with the Rag GTPases, thereby playing a key role in the recruitment of the mTORC1 complex to lysosomes. Also involved in the control of embryonic stem cells differentiation via non-canonical RagC/RRAGC and RagD/RRAGD activation: together with FLCN, it is necessary to recruit and activate RagC/RRAGC and RagD/RRAGD at the lysosomes, and to induce exit of embryonic stem cells from pluripotency via non-canonical, mTOR-independent TFE3 inactivation. Also required for late endosomes/lysosomes biogenesis it may regulate both the recycling of receptors through endosomes and the MAPK signaling pathway through recruitment of some of its components to late endosomes. May be involved in cholesterol homeostasis regulating LDL uptake and cholesterol release from late endosomes/lysosomes. May also play a role in RHOA activation. This Mus musculus (Mouse) protein is Ragulator complex protein LAMTOR1.